Here is a 449-residue protein sequence, read N- to C-terminus: Exodeoxyribonuclease 7 large subunit (449 aa).

This sequence belongs to the XseA family. In terms of assembly, heterooligomer composed of large and small subunits.

It localises to the cytoplasm. The catalysed reaction is Exonucleolytic cleavage in either 5'- to 3'- or 3'- to 5'-direction to yield nucleoside 5'-phosphates.. In terms of biological role, bidirectionally degrades single-stranded DNA into large acid-insoluble oligonucleotides, which are then degraded further into small acid-soluble oligonucleotides. The sequence is that of Exodeoxyribonuclease 7 large subunit from Salmonella heidelberg (strain SL476).